A 411-amino-acid chain; its full sequence is Na(+)-translocating NADH-quinone reductase subunit F (411 aa).

Residues 5 to 25 (VILALGIAAFTVIVLVLVAII) form a helical membrane-spanning segment. In terms of domain architecture, 2Fe-2S ferredoxin-type spans 36-130 (GDITIGINDD…NMEVELPEEI (95 aa)). Positions 73, 79, 82, and 114 each coordinate [2Fe-2S] cluster. An FAD-binding FR-type domain is found at 133–273 (VKKWECTVIS…SGPFGEFFAK (141 aa)).

It belongs to the NqrF family. As to quaternary structure, composed of six subunits; NqrA, NqrB, NqrC, NqrD, NqrE and NqrF. Requires [2Fe-2S] cluster as cofactor. It depends on FAD as a cofactor.

The protein localises to the cell inner membrane. It carries out the reaction a ubiquinone + n Na(+)(in) + NADH + H(+) = a ubiquinol + n Na(+)(out) + NAD(+). In terms of biological role, NQR complex catalyzes the reduction of ubiquinone-1 to ubiquinol by two successive reactions, coupled with the transport of Na(+) ions from the cytoplasm to the periplasm. The first step is catalyzed by NqrF, which accepts electrons from NADH and reduces ubiquinone-1 to ubisemiquinone by a one-electron transfer pathway. The protein is Na(+)-translocating NADH-quinone reductase subunit F of Haemophilus influenzae (strain PittEE).